We begin with the raw amino-acid sequence, 358 residues long: Isopentenyl-diphosphate delta-isomerase (358 aa).

12–13 (RK) provides a ligand contact to substrate. Residues 69 to 71 (AMT), Ser-99, and Asn-128 each bind FMN. Residue Gln-158 participates in substrate binding. Glu-159 lines the Mg(2+) pocket. Residues Lys-190, Thr-220, 267–269 (GIR), and 288–289 (AG) each bind FMN.

The protein belongs to the IPP isomerase type 2 family. In terms of assembly, homooctamer. Dimer of tetramers. FMN serves as cofactor. NADPH is required as a cofactor. Requires Mg(2+) as cofactor.

The protein resides in the cytoplasm. The catalysed reaction is isopentenyl diphosphate = dimethylallyl diphosphate. In terms of biological role, involved in the biosynthesis of isoprenoids. Catalyzes the 1,3-allylic rearrangement of the homoallylic substrate isopentenyl (IPP) to its allylic isomer, dimethylallyl diphosphate (DMAPP). The sequence is that of Isopentenyl-diphosphate delta-isomerase from Listeria innocua serovar 6a (strain ATCC BAA-680 / CLIP 11262).